We begin with the raw amino-acid sequence, 301 residues long: Growth-regulating factor 2 (301 aa).

Residues 11 to 46 form the QLQ domain; that stretch reads LFTATQWQELEHQALIYKYMAAGAPVPPDLLLHLRH. 2 consecutive short sequence motifs (bipartite nuclear localization signal) follow at residues 83 to 102 and 120 to 127; these read RRVE…KKWR and RGKNRSRK. A WRC domain is found at 87–131; the sequence is DPEPGRCRRTDGKKWRCSREAYGESKYCEKHMHRGKNRSRKPVEM.

Belongs to the GRF family.

It is found in the nucleus. In terms of biological role, transcription activator that plays a regulatory role in gibberellin-induced stem elongation. This is Growth-regulating factor 2 (GRF2) from Oryza sativa subsp. japonica (Rice).